Consider the following 133-residue polypeptide: Large ribosomal subunit protein bL17 (133 aa).

This sequence belongs to the bacterial ribosomal protein bL17 family. As to quaternary structure, part of the 50S ribosomal subunit. Contacts protein L32.

The sequence is that of Large ribosomal subunit protein bL17 from Alteromonas mediterranea (strain DSM 17117 / CIP 110805 / LMG 28347 / Deep ecotype).